The following is a 237-amino-acid chain: NAD(P)H-quinone oxidoreductase subunit K, chloroplastic (237 aa).

Cys-55, Cys-56, Cys-120, and Cys-151 together coordinate [4Fe-4S] cluster.

The protein belongs to the complex I 20 kDa subunit family. NDH is composed of at least 16 different subunits, 5 of which are encoded in the nucleus. [4Fe-4S] cluster is required as a cofactor.

Its subcellular location is the plastid. The protein resides in the chloroplast thylakoid membrane. The enzyme catalyses a plastoquinone + NADH + (n+1) H(+)(in) = a plastoquinol + NAD(+) + n H(+)(out). It carries out the reaction a plastoquinone + NADPH + (n+1) H(+)(in) = a plastoquinol + NADP(+) + n H(+)(out). NDH shuttles electrons from NAD(P)H:plastoquinone, via FMN and iron-sulfur (Fe-S) centers, to quinones in the photosynthetic chain and possibly in a chloroplast respiratory chain. The immediate electron acceptor for the enzyme in this species is believed to be plastoquinone. Couples the redox reaction to proton translocation, and thus conserves the redox energy in a proton gradient. The chain is NAD(P)H-quinone oxidoreductase subunit K, chloroplastic from Nephroselmis olivacea (Green alga).